Reading from the N-terminus, the 231-residue chain is NKG2-C type II integral membrane protein (231 aa).

The span at 1-12 (MNKQRGTFSEVS) shows a compositional bias: polar residues. A disordered region spans residues 1–31 (MNKQRGTFSEVSLAQDPKRQQRKPKDNKSSI). Topologically, residues 1 to 70 (MNKQRGTFSE…CQGLLPPPEK (70 aa)) are cytoplasmic. Positions 16 to 28 (DPKRQQRKPKDNK) are enriched in basic and acidic residues. A helical; Signal-anchor for type II membrane protein transmembrane segment spans residues 71–93 (LTAEVLGIICIVLMATVLKTVVL). Topologically, residues 94–231 (IPFLEQNNSF…SKRYYCKHKL (138 aa)) are extracellular. The N-linked (GlcNAc...) asparagine glycan is linked to Asn-100. The region spanning 116 to 229 (HCPEEWITYS…GSSKRYYCKH (114 aa)) is the C-type lectin domain. Intrachain disulfides connect Cys-117–Cys-128, Cys-145–Cys-227, and Cys-206–Cys-219. Asn-149 is a glycosylation site (N-linked (GlcNAc...) asparagine).

Heterodimer with KLRD1; disulfide-linked. KLRD1-KLRC2 receptor complex interacts with TYROBP/DAP12 homodimer; this interaction is necessary for the expression on the cell surface. Natural killer cells.

It is found in the cell membrane. In terms of biological role, immune activating receptor involved in self-nonself discrimination. In complex with KLRD1 on cytotoxic lymphocyte subsets, recognizes non-classical major histocompatibility MHC-E loaded with signal sequence-derived peptides from non-classical MHC-G molecules, likely playing a role in the generation and effector functions of adaptive natural killer (NK) cells and in maternal-fetal tolerance during pregnancy. Regulates the effector functions of terminally differentiated cytotoxic lymphocyte subsets, and in particular may play a role in adaptive NK cell response to viral infection. Upon MHC-E-peptide binding, transmits intracellular signals via the adapter protein TYROBP/DAP12, triggering the phosphorylation of proximal signaling molecules and cell activation. The chain is NKG2-C type II integral membrane protein (KLRC2) from Macaca mulatta (Rhesus macaque).